We begin with the raw amino-acid sequence, 471 residues long: Major facilitator-type transporter psiT1 (471 aa).

Residues 1 to 36 are disordered; the sequence is MNPTTATDAHERTSLLSGRPQSAANSTAPYERQVQP. Residues 14–36 are compositionally biased toward polar residues; the sequence is SLLSGRPQSAANSTAPYERQVQP. An N-linked (GlcNAc...) asparagine glycan is attached at N25. 8 helical membrane-spanning segments follow: residues 44–64, 108–128, 140–160, 168–188, 212–232, 237–257, 322–342, and 356–376; these read TPVTVITIITLIYRLATTMVI, AIMVSMTTVIDGLGGILGTGI, PVLMFLLSCTMIDHLAILTVQ, LVTFGLIMIVETIGNENTTVF, GWLVLGGALAYSIGGSITTFL, AVYIVSFSVTGIVLTFTAFVL, LHSFIVTLADAYALPAMLIFF, and VMTTYSVSSVFVLAIALPLFI. An N-linked (GlcNAc...) asparagine glycan is attached at N384. The helical transmembrane segment at 424–444 threads the bilayer; the sequence is VHITVISWTIESLAYIVLGTV.

This sequence belongs to the major facilitator superfamily. TCR/Tet family.

The protein localises to the membrane. In terms of biological role, major facilitator-type transporter; part of the gene cluster that mediates the biosynthesis of psilocybin, a psychotropic tryptamine-derived natural product. The protein is Major facilitator-type transporter psiT1 of Psilocybe cyanescens.